The primary structure comprises 316 residues: Beta-ketoacyl-[acyl-carrier-protein] synthase III (316 aa).

Residues Cys112 and His243 contribute to the active site. Residues 244–248 are ACP-binding; it reads QANLR. Asn273 is an active-site residue.

The protein belongs to the thiolase-like superfamily. FabH family. In terms of assembly, homodimer.

It localises to the cytoplasm. It carries out the reaction malonyl-[ACP] + acetyl-CoA + H(+) = 3-oxobutanoyl-[ACP] + CO2 + CoA. Its pathway is lipid metabolism; fatty acid biosynthesis. Catalyzes the condensation reaction of fatty acid synthesis by the addition to an acyl acceptor of two carbons from malonyl-ACP. Catalyzes the first condensation reaction which initiates fatty acid synthesis and may therefore play a role in governing the total rate of fatty acid production. Possesses both acetoacetyl-ACP synthase and acetyl transacylase activities. Its substrate specificity determines the biosynthesis of branched-chain and/or straight-chain of fatty acids. The polypeptide is Beta-ketoacyl-[acyl-carrier-protein] synthase III (Yersinia pseudotuberculosis serotype O:1b (strain IP 31758)).